A 232-amino-acid polypeptide reads, in one-letter code: Octanoyltransferase (232 aa).

The BPL/LPL catalytic domain occupies 40–226 (GSAPERVWLL…TWQDLFGSVP (187 aa)). Substrate is bound by residues 79 to 86 (RGGQWTYH), 157 to 159 (ALG), and 170 to 172 (GVA). C188 functions as the Acyl-thioester intermediate in the catalytic mechanism.

The protein belongs to the LipB family.

The protein resides in the cytoplasm. It catalyses the reaction octanoyl-[ACP] + L-lysyl-[protein] = N(6)-octanoyl-L-lysyl-[protein] + holo-[ACP] + H(+). Its pathway is protein modification; protein lipoylation via endogenous pathway; protein N(6)-(lipoyl)lysine from octanoyl-[acyl-carrier-protein]: step 1/2. Functionally, catalyzes the transfer of endogenously produced octanoic acid from octanoyl-acyl-carrier-protein onto the lipoyl domains of lipoate-dependent enzymes. Lipoyl-ACP can also act as a substrate although octanoyl-ACP is likely to be the physiological substrate. In Gluconacetobacter diazotrophicus (strain ATCC 49037 / DSM 5601 / CCUG 37298 / CIP 103539 / LMG 7603 / PAl5), this protein is Octanoyltransferase.